Consider the following 2850-residue polypeptide: Mucin-6 (2850 aa).

Residues 1-22 (MLRVRQLLLLLLFRGPLIDAGA) form the signal peptide. A VWFD 1 domain is found at 43–256 (GWCSTWGAGH…KLDDPNEICA (214 aa)). Cystine bridges form between cysteine 45–cysteine 218 and cysteine 67–cysteine 255. Asparagine 94 carries N-linked (GlcNAc...) asparagine glycosylation. Residues 160-183 (HLTEGQGGDEVGTPGTLKQESKGS) form a disordered region. Asparagine 310 carries an N-linked (GlcNAc...) asparagine glycan. Residues 344-399 (CPANQVYQECGEVCIKTCSNPQHSCSSPCTFGCFCPHGTLLDDISGNQSCVPVNQC) enclose the TIL 1 domain. The 185-residue stretch at 437 to 621 (GHCSLEGGSF…ALEREMDPCS (185 aa)) folds into the VWFD 2 domain. 2 disulfide bridges follow: cysteine 439/cysteine 575 and cysteine 461/cysteine 620. Asparagine 528 and asparagine 701 each carry an N-linked (GlcNAc...) asparagine glycan. A TIL 2 domain is found at 806–869 (CPEPKTFQSC…DGQCVPAEEC (64 aa)). Residues 908-1080 (STCVLYGEGH…NSWKESPLCG (173 aa)) form the VWFD 3 domain. 4 cysteine pairs are disulfide-bonded: cysteine 910/cysteine 1044, cysteine 932/cysteine 1079, cysteine 941/cysteine 1041, and cysteine 959/cysteine 966. Asparagine 1017 and asparagine 1221 each carry an N-linked (GlcNAc...) asparagine glycan. Residues 1263–1281 (EFHSSTSANTPVAPSYLPG) show a composition bias toward low complexity. Disordered regions lie at residues 1263–1363 (EFHS…TAEL), 1377–1400 (GMST…THRV), 1466–1504 (VSAN…PSTT), 1580–1600 (TPPV…RTTH), 1626–1650 (IASP…TSSV), 1705–1813 (TKTS…SLST), 1877–1942 (QTKS…RTTH), 1968–1992 (IASP…TSSV), 2049–2119 (TSFS…PSTT), 2219–2254 (QTKS…TTNS), 2276–2295 (IAHT…SSTT), 2306–2338 (EQST…SPTD), 2370–2473 (TTPP…FRTP), 2511–2621 (PTNP…TFVS), 2634–2674 (PTIH…KSTT), and 2692–2761 (STMG…GTCS). Polar residues predominate over residues 1294–1312 (EELTVWTTPKESTVSSGEY). Residues 1345–1363 (TSKPTASSLSSSTKTTAEL) show a composition bias toward low complexity. Polar residues-rich tracts occupy residues 1378–1399 (MSTS…TTHR) and 1466–1484 (VSAN…PVVH). 8 tandem repeats follow at residues 1440-1555 (TQNL…PTTE), 1556-1712 (GLNT…FSTD), 1713-1885 (RTST…FSTD), 1886-2054 (RTSA…FSTD), 2055-2227 (RTST…FSTD), 2228-2396 (RTST…FSTE), 2397-2563 (RTST…FPTT), and 2564-2671 (RTST…FSSK). Residues 1440–2671 (TQNLFSTAPH…VPTFSSFSSK (1232 aa)) form an approximate repeats region. A compositionally biased stretch (low complexity) spans 1485-1504 (TTSGTSSSPQTPRTTHPSTT). The span at 1626–1639 (IASPTPSAPQTSLA) shows a compositional bias: polar residues. The segment covering 1705–1719 (TKTSFSTDRTSTSTS) has biased composition (low complexity). Residues 1720–1757 (APHLSETSAVTAHQSTPTAVSANSIKPTMSSTGTPVVH) are compositionally biased toward polar residues. The span at 1758–1777 (TTSGTTSSPQTPRTTHPSTT) shows a compositional bias: low complexity. Polar residues predominate over residues 1778 to 1813 (VAVSGTVHTTGLPSGTSVHTTTNFPTHSGPQSSLST). Over residues 1893 to 1942 (SQPSTVTPTQSTPIPATTNSLMTTGGLTGTPPVHTTSGTTSSPQTPRTTH) the composition is skewed to low complexity. Residues 1968–1981 (IASPTPSAPQTSLA) show a composition bias toward polar residues. Positions 2049-2061 (TSFSTDRTSTSTS) are enriched in low complexity. Residues 2062–2099 (APHLSETSAVTAHQSTPTAVSANSIKPTMSSTGTPVVH) show a composition bias toward polar residues. Residues 2100-2119 (TTSGTTSSPQTPRTTHPSTT) show a composition bias toward low complexity. The segment covering 2227–2238 (DRTSTPHLSQSS) has biased composition (polar residues). Positions 2282–2295 (TTHSLPTAASSSTT) are enriched in low complexity. The segment covering 2370–2384 (TTPPNTSTPVTHSTS) has biased composition (low complexity). Residues 2385–2429 (ATTEAQGSFSTERTSTSYLSHPSSTTVHQSTAGPVITSIKSTMGV) show a composition bias toward polar residues. Residues 2436 to 2456 (HTTSGTTSSPQTPHSTHPIST) are compositionally biased toward low complexity. Polar residues predominate over residues 2457 to 2466 (AAISRTTGIS). The span at 2516–2533 (SVSSASTSRPLSTSLPTT) shows a compositional bias: low complexity. Polar residues predominate over residues 2534 to 2560 (IKGTGTPQTPVSDINTTSATTQAHSSF). The segment covering 2561–2584 (PTTRTSTSHLSLPSSMTSTLTPAS) has biased composition (low complexity). The span at 2585-2601 (RSASTLQYTPTPSSVSH) shows a compositional bias: polar residues. Positions 2639–2674 (TPTPSSRPTSSTGLLSTSKTTSHVPTFSSFSSKSTT) are enriched in low complexity. Over residues 2692 to 2725 (STMGMTNLPSSGSPDINHTTRPPGSSPLPTSAFL) the composition is skewed to polar residues. Low complexity predominate over residues 2726–2759 (SRSTSPTGSSSPSTPVSSSNPDSSVSSPPSHPGT). 4 cysteine pairs are disulfide-bonded: cysteine 2760–cysteine 2807, cysteine 2774–cysteine 2821, cysteine 2783–cysteine 2841, and cysteine 2787–cysteine 2843. The 90-residue stretch at 2760–2849 (CSLQEEEHQI…SCVCSPLQCK (90 aa)) folds into the CTCK domain.

In terms of assembly, multimer; disulfide-linked. In terms of processing, O-glycosylated. In terms of tissue distribution, expressed in stomach, duodenum and small intestine.

The protein localises to the secreted. Its function is as follows. May provide a mechanism for modulation of the composition of the protective mucus layer related to acid secretion or the presence of bacteria and noxious agents in the lumen. Plays an important role in the cytoprotection of epithelial surfaces and are used as tumor markers in a variety of cancers. May play a role in epithelial organogenesis. The chain is Mucin-6 (Muc6) from Mus musculus (Mouse).